Reading from the N-terminus, the 253-residue chain is Cyclin-C1-2 (253 aa).

Belongs to the cyclin family. Cyclin C subfamily.

This chain is Cyclin-C1-2 (CYCC1-2), found in Arabidopsis thaliana (Mouse-ear cress).